The sequence spans 368 residues: Phosphoribosylaminoimidazole-succinocarboxamide synthase (368 aa).

This sequence belongs to the SAICAR synthetase family.

It catalyses the reaction 5-amino-1-(5-phospho-D-ribosyl)imidazole-4-carboxylate + L-aspartate + ATP = (2S)-2-[5-amino-1-(5-phospho-beta-D-ribosyl)imidazole-4-carboxamido]succinate + ADP + phosphate + 2 H(+). It functions in the pathway purine metabolism; IMP biosynthesis via de novo pathway; 5-amino-1-(5-phospho-D-ribosyl)imidazole-4-carboxamide from 5-amino-1-(5-phospho-D-ribosyl)imidazole-4-carboxylate: step 1/2. In Vibrio cholerae serotype O1 (strain ATCC 39315 / El Tor Inaba N16961), this protein is Phosphoribosylaminoimidazole-succinocarboxamide synthase.